We begin with the raw amino-acid sequence, 348 residues long: N-formyl peptide receptor 2 (348 aa).

N-linked (GlcNAc...) asparagine glycosylation occurs at Asn-1. The Extracellular portion of the chain corresponds to 1-24; that stretch reads NFSTPLNEHEEVSYESAGYTVLQI. Residues 25-47 traverse the membrane as a helical segment; sequence LPLVVLGVTFVLGVLGNGLVIWV. Residues 48 to 58 lie on the Cytoplasmic side of the membrane; that stretch reads AGFRMTRTVTT. A helical membrane pass occupies residues 59–80; sequence ICYLNLPLADFSFTATLPFLIV. Topologically, residues 81 to 97 are extracellular; the sequence is SMAMGEKWPFGWFLCKL. A disulfide bond links Cys-95 and Cys-173. Residues 98–118 form a helical membrane-spanning segment; sequence IHIVVDINLFGSVFLIGFIAL. The Cytoplasmic segment spans residues 119 to 137; that stretch reads DRCICVLHPVWAQNHRTVS. A helical transmembrane segment spans residues 138–159; that stretch reads LAMKVIIGPWILALVLTLPVFL. Over 160-202 the chain is Extracellular; the sequence is FLTTVTIPNGDTYCTFNFASWGGTPEERKNVAITMLTARGIIR. A helical membrane pass occupies residues 203–223; the sequence is FVIGFSMPMSIVAICYGLIAA. Over 224–239 the chain is Cytoplasmic; the sequence is KIHKKGMIKSSRPLRV. A helical membrane pass occupies residues 240 to 263; the sequence is LTAVVASFFICWFPFQLVALLSTV. Residues 264 to 283 lie on the Extracellular side of the membrane; the sequence is WLKEMLFYGKYKIINILVNP. A helical transmembrane segment spans residues 284–303; sequence TSSLAFFNSCLNPMLYVFVG. Residues 304-348 lie on the Cytoplasmic side of the membrane; it reads QDFRERLIRSLPTSLERALSEDSAPTNDTAAKCASPPAETELQAM. Residues 323-348 form a disordered region; that stretch reads SEDSAPTNDTAAKCASPPAETELQAM.

Belongs to the G-protein coupled receptor 1 family. Interacts with APP; the interaction takes place at the cell surface and the complex is then rapidly internalized.

The protein resides in the cell membrane. In terms of biological role, low affinity receptor for N-formyl-methionyl peptides, which are powerful neutrophil chemotactic factors. Binding of FMLP to the receptor causes activation of neutrophils. This response is mediated via a G-protein that activates a phosphatidylinositol-calcium second messenger system. Receptor for the chemokine-like protein FAM19A5, mediating FAM19A5-stimulated macrophage chemotaxis and the inhibitory effect on TNFSF11/RANKL-induced osteoclast differentiation. In Pongo pygmaeus (Bornean orangutan), this protein is N-formyl peptide receptor 2 (FPR2).